A 361-amino-acid chain; its full sequence is Protein RecA (361 aa).

An ATP-binding site is contributed by 77–84 (GPESSGKT).

Belongs to the RecA family.

The protein resides in the cytoplasm. In terms of biological role, can catalyze the hydrolysis of ATP in the presence of single-stranded DNA, the ATP-dependent uptake of single-stranded DNA by duplex DNA, and the ATP-dependent hybridization of homologous single-stranded DNAs. It interacts with LexA causing its activation and leading to its autocatalytic cleavage. In Brucella suis (strain ATCC 23445 / NCTC 10510), this protein is Protein RecA.